A 237-amino-acid chain; its full sequence is Phosphoserine phosphatase (237 aa).

Asp30 serves as the catalytic Nucleophile. Asp30 and Asp32 together coordinate Mg(2+). The Proton donor role is filled by Asp32. Residues Glu39, Arg76, 120–121 (SG), and Lys169 each bind substrate. Residue Asp192 coordinates Mg(2+). Residue Asn195 coordinates substrate.

It belongs to the HAD-like hydrolase superfamily. SerB family. Requires Mg(2+) as cofactor.

It catalyses the reaction O-phospho-L-serine + H2O = L-serine + phosphate. It carries out the reaction O-phospho-D-serine + H2O = D-serine + phosphate. The protein operates within amino-acid biosynthesis; L-serine biosynthesis; L-serine from 3-phospho-D-glycerate: step 3/3. Functionally, catalyzes the dephosphorylation of phosphoserine (P-Ser) in vitro. Also catalyzes the dephosphorylation of phosphothreonine (P-Thr) in vitro. The protein is Phosphoserine phosphatase of Albidiferax ferrireducens (strain ATCC BAA-621 / DSM 15236 / T118) (Rhodoferax ferrireducens).